A 313-amino-acid polypeptide reads, in one-letter code: tRNA dimethylallyltransferase (313 aa).

11–18 serves as a coordination point for ATP; sequence GPTACGKT. 13–18 serves as a coordination point for substrate; it reads TACGKT. Interaction with substrate tRNA stretches follow at residues 36-39, 160-164, and 243-248; these read DSAL, QRIER, and RCVGYR.

This sequence belongs to the IPP transferase family. Monomer. Mg(2+) serves as cofactor.

It carries out the reaction adenosine(37) in tRNA + dimethylallyl diphosphate = N(6)-dimethylallyladenosine(37) in tRNA + diphosphate. Functionally, catalyzes the transfer of a dimethylallyl group onto the adenine at position 37 in tRNAs that read codons beginning with uridine, leading to the formation of N6-(dimethylallyl)adenosine (i(6)A). This is tRNA dimethylallyltransferase from Neisseria meningitidis serogroup C (strain 053442).